The primary structure comprises 584 residues: DNA ligase (584 aa).

Glutamate 249 serves as a coordination point for ATP. The N6-AMP-lysine intermediate role is filled by lysine 251. ATP-binding residues include arginine 256, arginine 271, glutamate 301, phenylalanine 341, arginine 416, and lysine 422.

Belongs to the ATP-dependent DNA ligase family. It depends on Mg(2+) as a cofactor.

It carries out the reaction ATP + (deoxyribonucleotide)n-3'-hydroxyl + 5'-phospho-(deoxyribonucleotide)m = (deoxyribonucleotide)n+m + AMP + diphosphate.. In terms of biological role, DNA ligase that seals nicks in double-stranded DNA during DNA replication, DNA recombination and DNA repair. This chain is DNA ligase, found in Pyrobaculum arsenaticum (strain DSM 13514 / JCM 11321 / PZ6).